Here is a 635-residue protein sequence, read N- to C-terminus: Bifunctional lysine-specific demethylase and histidyl-hydroxylase NO66 (635 aa).

2 disordered regions span residues 1–115 (MSAV…LQNS) and 141–190 (FNGE…KANG). The span at 84-99 (ASASDINTSASKNVNA) shows a compositional bias: low complexity. Positions 141-156 (FNGESLKNNSNHSTPV) are enriched in polar residues. The region spanning 295-440 (CSIRMLNPQT…DLLELFFPHA (146 aa)) is the JmjC domain. Residues H341, D343, and H406 each contribute to the Fe cation site.

The protein belongs to the ROX family. NO66 subfamily. The cofactor is Fe(2+).

The protein resides in the nucleus. It carries out the reaction N(6),N(6)-dimethyl-L-lysyl(36)-[histone H3] + 2 2-oxoglutarate + 2 O2 = L-lysyl(36)-[histone H3] + 2 formaldehyde + 2 succinate + 2 CO2. Oxygenase that can act as both a histone lysine demethylase and a ribosomal histidine hydroxylase. Specifically demethylates 'Lys-4' (H3K4me) and 'Lys-36' (H3K36me) of histone H3, thereby playing a central role in histone code. This Aedes aegypti (Yellowfever mosquito) protein is Bifunctional lysine-specific demethylase and histidyl-hydroxylase NO66.